Consider the following 258-residue polypeptide: Putative phosphoenolpyruvate synthase regulatory protein (258 aa).

Residue 146-153 (GVSRVGKT) coordinates ADP.

It belongs to the pyruvate, phosphate/water dikinase regulatory protein family. PSRP subfamily.

The enzyme catalyses [pyruvate, water dikinase] + ADP = [pyruvate, water dikinase]-phosphate + AMP + H(+). The catalysed reaction is [pyruvate, water dikinase]-phosphate + phosphate + H(+) = [pyruvate, water dikinase] + diphosphate. In terms of biological role, bifunctional serine/threonine kinase and phosphorylase involved in the regulation of the phosphoenolpyruvate synthase (PEPS) by catalyzing its phosphorylation/dephosphorylation. The sequence is that of Putative phosphoenolpyruvate synthase regulatory protein from Thiobacillus denitrificans (strain ATCC 25259 / T1).